A 538-amino-acid chain; its full sequence is Nucleobase-ascorbate transporter 7 (538 aa).

The span at 1–11 (MAGGGGGGGGV) shows a compositional bias: gly residues. Positions 1 to 20 (MAGGGGGGGGVAPPLKHDGL) are disordered. The next 12 helical transmembrane spans lie at 45-65 (AILL…LIPT), 81-101 (MVQT…FFGT), 103-123 (LPAV…IILA), 143-163 (IQGA…SGLW), 166-186 (VVRL…GFGL), 191-211 (FPLL…LLLF), 229-249 (FAVI…TVGG), 295-315 (FAMM…YIVV), 372-394 (VVQI…AIFA), 398-420 (APVV…LSLL), 432-452 (FILG…NQYT), and 471-491 (INVP…FLDV).

Belongs to the nucleobase:cation symporter-2 (NCS2) (TC 2.A.40) family. As to expression, expressed exclusively in ovules.

The protein localises to the cell membrane. This chain is Nucleobase-ascorbate transporter 7 (NAT7), found in Arabidopsis thaliana (Mouse-ear cress).